Here is a 389-residue protein sequence, read N- to C-terminus: Protein CysO (389 aa).

Lys127 bears the N6-(pyridoxal phosphate)lysine mark. Pyridoxal 5'-phosphate is bound by residues Asn155, 261–265, and Ser341; that span reads GTSGH.

This sequence belongs to the cysteine synthase/cystathionine beta-synthase family. In terms of assembly, homodimer. Requires pyridoxal 5'-phosphate as cofactor.

The enzyme catalyses O-acetyl-L-serine + hydrogen sulfide = L-cysteine + acetate. The catalysed reaction is O-phospho-L-serine + hydrogen sulfide + H(+) = L-cysteine + phosphate. It catalyses the reaction L-homocysteine + L-serine = L,L-cystathionine + H2O. It functions in the pathway amino-acid biosynthesis; L-cysteine biosynthesis; L-cysteine from L-serine: step 2/2. Functionally, cysteine synthase that can also catalyze the synthesis of S-sulfo-L-cysteine from thiosulfate and O(3)-acetyl-L-serine, as well as the sulfhydrylation of L-serine by sulfide. This is Protein CysO (cysO) from Aeropyrum pernix (strain ATCC 700893 / DSM 11879 / JCM 9820 / NBRC 100138 / K1).